The sequence spans 500 residues: Protein-tyrosine sulfotransferase (500 aa).

The first 24 residues, M1–A24, serve as a signal peptide directing secretion. The Lumenal segment spans residues E25–K467. Active-site residues include R121 and E142. N-linked (GlcNAc...) asparagine glycosylation is found at N156, N248, N315, N343, N359, and N395. The chain crosses the membrane as a helical span at residues L468–V488. Over N489–I500 the chain is Cytoplasmic.

Expressed throughout the plant body, highest levels of expression are in the root apical meristem.

It is found in the golgi apparatus membrane. The enzyme catalyses L-tyrosyl-[protein] + 3'-phosphoadenylyl sulfate = O-sulfo-L-tyrosine-[protein] + adenosine 3',5'-bisphosphate + H(+). Its function is as follows. Catalyzes the O-sulfation of tyrosine residues within acidic motifs of polypeptides. This chain is Protein-tyrosine sulfotransferase (TPST), found in Arabidopsis thaliana (Mouse-ear cress).